The primary structure comprises 398 residues: 4-hydroxy-3-methylbut-2-enyl diphosphate reductase (398 aa).

Cys-66 provides a ligand contact to [4Fe-4S] cluster. A (2E)-4-hydroxy-3-methylbut-2-enyl diphosphate-binding site is contributed by His-96. His-96 provides a ligand contact to dimethylallyl diphosphate. His-96 lines the isopentenyl diphosphate pocket. Cys-157 lines the [4Fe-4S] cluster pocket. Residue His-185 coordinates (2E)-4-hydroxy-3-methylbut-2-enyl diphosphate. His-185 contacts dimethylallyl diphosphate. His-185 contributes to the isopentenyl diphosphate binding site. Residue Glu-187 is the Proton donor of the active site. Thr-250 serves as a coordination point for (2E)-4-hydroxy-3-methylbut-2-enyl diphosphate. Position 288 (Cys-288) interacts with [4Fe-4S] cluster. The (2E)-4-hydroxy-3-methylbut-2-enyl diphosphate site is built by Ser-317, Ser-318, Asn-319, and Ser-380. Dimethylallyl diphosphate-binding residues include Ser-317, Ser-318, Asn-319, and Ser-380. Isopentenyl diphosphate is bound by residues Ser-317, Ser-318, Asn-319, and Ser-380.

This sequence belongs to the IspH family. It depends on [4Fe-4S] cluster as a cofactor.

It carries out the reaction isopentenyl diphosphate + 2 oxidized [2Fe-2S]-[ferredoxin] + H2O = (2E)-4-hydroxy-3-methylbut-2-enyl diphosphate + 2 reduced [2Fe-2S]-[ferredoxin] + 2 H(+). The enzyme catalyses dimethylallyl diphosphate + 2 oxidized [2Fe-2S]-[ferredoxin] + H2O = (2E)-4-hydroxy-3-methylbut-2-enyl diphosphate + 2 reduced [2Fe-2S]-[ferredoxin] + 2 H(+). Its pathway is isoprenoid biosynthesis; dimethylallyl diphosphate biosynthesis; dimethylallyl diphosphate from (2E)-4-hydroxy-3-methylbutenyl diphosphate: step 1/1. It participates in isoprenoid biosynthesis; isopentenyl diphosphate biosynthesis via DXP pathway; isopentenyl diphosphate from 1-deoxy-D-xylulose 5-phosphate: step 6/6. Its function is as follows. Catalyzes the conversion of 1-hydroxy-2-methyl-2-(E)-butenyl 4-diphosphate (HMBPP) into a mixture of isopentenyl diphosphate (IPP) and dimethylallyl diphosphate (DMAPP). Acts in the terminal step of the DOXP/MEP pathway for isoprenoid precursor biosynthesis. The chain is 4-hydroxy-3-methylbut-2-enyl diphosphate reductase from Prochlorococcus marinus (strain MIT 9301).